The primary structure comprises 41 residues: uncharacterized protein (41 aa).

The disordered stretch occupies residues 19-41; it reads NSTRNSSSSSRSSYSSRTTVFSL.

This is an uncharacterized protein from Dictyostelium discoideum (Social amoeba).